The chain runs to 238 residues: Monocyte to macrophage differentiation factor (238 aa).

Over 1 to 28 (MRFKNRFQRFMNHRAPANGRYKPTCYEH) the chain is Cytoplasmic. The chain crosses the membrane as a helical span at residues 29-49 (AANCYTHAFLIVPAIVGSALL). Topologically, residues 50-61 (HRLSDDCWEKIT) are lumenal. Residues 62–82 (AWIYGMGLCALFIVSTVFHIV) traverse the membrane as a helical segment. The Cytoplasmic segment spans residues 83–101 (SWKKSHLRTVEHCFHMCDR). A helical membrane pass occupies residues 102 to 122 (MVIYFFIAASYAPWLNLRELG). Residues 123 to 124 (PL) are Lumenal-facing. Residues 125–145 (ASHMRWFIWLMAAGGTIYVFL) form a helical membrane-spanning segment. Residues 146-151 (YHEKYK) lie on the Cytoplasmic side of the membrane. The helical transmembrane segment at 152–172 (VVELFFYLTMGFSPALVVTSM) threads the bilayer. Over 173–174 (NN) the chain is Lumenal. Residues 175–195 (TDGLQELACGGLIYCLGVVFF) traverse the membrane as a helical segment. Over 196 to 198 (KSD) the chain is Cytoplasmic. The chain crosses the membrane as a helical span at residues 199–219 (GIIPFAHAIWHLFVATAAAVH). Over 220–238 (YYAIWKYLYRSPTDFMRHL) the chain is Lumenal.

This sequence belongs to the ADIPOR family. Exhibits relatively ubiquitous expression with preferential expression in mature (in vitro differentiated) macrophages.

It localises to the late endosome membrane. It is found in the lysosome membrane. In terms of biological role, involved in the dynamics of lysosomal membranes associated with microglial activation following brain lesion. This chain is Monocyte to macrophage differentiation factor, found in Homo sapiens (Human).